We begin with the raw amino-acid sequence, 448 residues long: Late embryogenesis abundant protein ECP63 (448 aa).

Basic and acidic residues-rich tracts occupy residues 282 to 326 (TEEA…EEAG) and 334 to 354 (QKTR…KDSA). 2 disordered regions span residues 282 to 360 (TEEA…RGNE) and 411 to 448 (SKPG…KGKL). Residues 297 to 331 (KENMEKAGEVTRQKMEEMRLEGKELKEEAGAKAQE) are a coiled coil. Residues 420 to 432 (LKASDQMTGQTFN) show a composition bias toward polar residues. Residues 435-448 (GRMDDDARKDKGKL) show a composition bias toward basic and acidic residues.

This sequence belongs to the LEA type 4 family. In terms of tissue distribution, expressed in mature seeds.

Its function is as follows. May be involved in the BHLH109-mediated regulation of somatic embryogenesis. The sequence is that of Late embryogenesis abundant protein ECP63 from Arabidopsis thaliana (Mouse-ear cress).